The primary structure comprises 63 residues: Large ribosomal subunit protein uL30 (63 aa).

It belongs to the universal ribosomal protein uL30 family. As to quaternary structure, part of the 50S ribosomal subunit.

This is Large ribosomal subunit protein uL30 from Rickettsia canadensis (strain McKiel).